A 130-amino-acid polypeptide reads, in one-letter code: Serum amyloid A-4 protein (130 aa).

The N-terminal stretch at 1-18 is a signal peptide; sequence MRLFTGIVFCSLVMGVTS. The N-linked (GlcNAc...) asparagine; partial glycan is linked to Asn94. A disordered region spans residues 101–130; it reads DSKSNEKAEEWGRSGKDPDRFRPDGLPKKY.

Belongs to the SAA family. Apolipoprotein of the HDL complex. Expressed by the liver; secreted in plasma.

The protein localises to the secreted. Functionally, major acute phase reactant. This is Serum amyloid A-4 protein from Homo sapiens (Human).